The sequence spans 561 residues: DNA ligase B (561 aa).

Lys125 functions as the N6-AMP-lysine intermediate in the catalytic mechanism.

The protein belongs to the NAD-dependent DNA ligase family. LigB subfamily.

The enzyme catalyses NAD(+) + (deoxyribonucleotide)n-3'-hydroxyl + 5'-phospho-(deoxyribonucleotide)m = (deoxyribonucleotide)n+m + AMP + beta-nicotinamide D-nucleotide.. Its function is as follows. Catalyzes the formation of phosphodiester linkages between 5'-phosphoryl and 3'-hydroxyl groups in double-stranded DNA using NAD as a coenzyme and as the energy source for the reaction. This is DNA ligase B from Salmonella agona (strain SL483).